The following is a 481-amino-acid chain: WD repeat-containing protein 55 homolog (481 aa).

Positions methionine 1–leucine 116 are disordered. 3 stretches are compositionally biased toward acidic residues: residues aspartate 12–methionine 23, isoleucine 31–phenylalanine 46, and aspartate 68–aspartate 81. WD repeat units follow at residues lysine 144–isoleucine 183, valine 188–leucine 227, alanine 231–glutamate 269, glutamine 272–glutamine 311, proline 314–aspartate 353, and glutamine 398–aspartate 437.

The protein belongs to the WD repeat WDR55 family.

The chain is WD repeat-containing protein 55 homolog from Drosophila ananassae (Fruit fly).